Here is a 350-residue protein sequence, read N- to C-terminus: Magnesium-chelatase 38 kDa subunit (350 aa).

Residue 52–59 (GDRGTGKS) coordinates ATP.

Belongs to the Mg-chelatase subunits D/I family.

The enzyme catalyses protoporphyrin IX + Mg(2+) + ATP + H2O = Mg-protoporphyrin IX + ADP + phosphate + 3 H(+). It functions in the pathway porphyrin-containing compound metabolism; bacteriochlorophyll biosynthesis. Its function is as follows. Involved in bacteriochlorophyll biosynthesis; introduces a magnesium ion into protoporphyrin IX to yield Mg-protoporphyrin IX. This Rhodobacter capsulatus (strain ATCC BAA-309 / NBRC 16581 / SB1003) protein is Magnesium-chelatase 38 kDa subunit (bchI).